A 104-amino-acid polypeptide reads, in one-letter code: Pterin-4-alpha-carbinolamine dehydratase (104 aa).

At alanine 2 the chain carries N-acetylalanine. Residues 61–63 (DHH) and 78–81 (STHE) contribute to the substrate site.

The protein belongs to the pterin-4-alpha-carbinolamine dehydratase family. Homotetramer and homodimer. Heterotetramer with HNF1A; formed by a dimer of dimers. Interacts with HNF1B (via HNF-p1 domain); the interaction increases HNF1B transactivation activity.

It is found in the cytoplasm. It localises to the nucleus. It catalyses the reaction (4aS,6R)-4a-hydroxy-L-erythro-5,6,7,8-tetrahydrobiopterin = (6R)-L-erythro-6,7-dihydrobiopterin + H2O. Its function is as follows. Involved in tetrahydrobiopterin biosynthesis. Seems to both prevent the formation of 7-pterins and accelerate the formation of quinonoid-BH2. Coactivator for HNF1A-dependent transcription. Regulates the dimerization of homeodomain protein HNF1A and enhances its transcriptional activity. Also acts as a coactivator for HNF1B-dependent transcription. The sequence is that of Pterin-4-alpha-carbinolamine dehydratase (PCBD1) from Bos taurus (Bovine).